A 366-amino-acid polypeptide reads, in one-letter code: Apolipoprotein A-V (366 aa).

A signal peptide spans 1–23; that stretch reads MASMAAVLTWALALLSAFSATQA. Coiled coils occupy residues 54–157 and 236–262; these read ATLK…VGED and TLKA…RAFA. Position 55 is a phosphothreonine; by FAM20C (Thr55). A Phosphoserine modification is found at Ser59.

Belongs to the apolipoprotein A1/A4/E family. In terms of assembly, interacts with GPIHBP1. Interacts with SORL1; this interaction leads to APOA5 internalization and sorting either to lysosomes and degradation, or to the trans-Golgi network. In terms of processing, phosphorylated by FAM20C in the extracellular medium. Liver and plasma.

Its subcellular location is the secreted. The protein resides in the early endosome. It localises to the late endosome. The protein localises to the golgi apparatus. It is found in the trans-Golgi network. Its function is as follows. Minor apolipoprotein mainly associated with HDL and to a lesser extent with VLDL. May also be associated with chylomicrons. Important determinant of plasma triglyceride (TG) levels by both being a potent stimulator of apo-CII lipoprotein lipase (LPL) TG hydrolysis and an inhibitor of the hepatic VLDL-TG production rate (without affecting the VLDL-apoB production rate). Activates poorly lecithin:cholesterol acyltransferase (LCAT) and does not enhance efflux of cholesterol from macrophages. Binds heparin. This is Apolipoprotein A-V (APOA5) from Homo sapiens (Human).